A 202-amino-acid polypeptide reads, in one-letter code: CASP-like protein 1E1 (202 aa).

Residues 1 to 33 are Cytoplasmic-facing; it reads MESQCRPNVDGVHNGVESHVKVVEKPRSVGSSS. A helical membrane pass occupies residues 34 to 54; it reads EFVLRILGLLLTLIAAVVAGV. Over 55-85 the chain is Extracellular; the sequence is DKQTKIIPLTLIKTLPSLHVPVTAKWSDMSA. The helical transmembrane segment at 86–106 threads the bilayer; it reads FVYLVVSNAIACSYAAISLVL. Residues 107–118 lie on the Cytoplasmic side of the membrane; the sequence is VTMLGRRGKGGR. The chain crosses the membrane as a helical span at residues 119–139; it reads VLAVIVLDLHMVGLLFSANGA. Residues 140–172 lie on the Extracellular side of the membrane; sequence ATAVGVLGQYGNSHVEWKKVCNVFDSFCHHLVA. Residues 173–193 form a helical membrane-spanning segment; the sequence is SLALSFLGSLSFLGLVLLAIL. The Cytoplasmic segment spans residues 194–202; the sequence is NLHKKSSTK.

This sequence belongs to the Casparian strip membrane proteins (CASP) family. Homodimer and heterodimers.

Its subcellular location is the cell membrane. The polypeptide is CASP-like protein 1E1 (Vitis vinifera (Grape)).